A 501-amino-acid polypeptide reads, in one-letter code: uncharacterized protein (501 aa).

This sequence belongs to the UbiD family.

This is an uncharacterized protein from Synechocystis sp. (strain ATCC 27184 / PCC 6803 / Kazusa).